The chain runs to 264 residues: Proteasome assembly chaperone 2 (264 aa).

A Phosphothreonine modification is found at T137.

This sequence belongs to the PSMG2 family. As to quaternary structure, forms a heterodimer with PSMG1. The PSMG1-PSMG2 heterodimer interacts directly with the PSMA5 and PSMA7 proteasome alpha subunits. Degraded by the proteasome upon completion of 20S proteasome maturation. Widely expressed with highest levels in lung, brain and colon. Moderately expressed in muscle, stomach, spleen and heart. Weakly expressed in small intestine, pancreas and liver. Highly expressed in hepatocellular carcinomas with low levels in surrounding liver tissue.

It is found in the nucleus. In terms of biological role, chaperone protein which promotes assembly of the 20S proteasome as part of a heterodimer with PSMG1. The PSMG1-PSMG2 heterodimer binds to the PSMA5 and PSMA7 proteasome subunits, promotes assembly of the proteasome alpha subunits into the heteroheptameric alpha ring and prevents alpha ring dimerization. This Homo sapiens (Human) protein is Proteasome assembly chaperone 2.